We begin with the raw amino-acid sequence, 492 residues long: Putative heme-binding protein VNG_2021C (492 aa).

His-177 is a binding site for heme. The interval 253 to 301 is disordered; it reads AGERVPAPEGGADAHGEGERTHHHGDSDHHDGDDGEQHHHSTGDEADDG. Positions 264–301 are enriched in basic and acidic residues; it reads ADAHGEGERTHHHGDSDHHDGDDGEQHHHSTGDEADDG. The region spanning 402-490 is the ABM domain; the sequence is GTMGMFYETK…VLADRPRHVF (89 aa).

It in the N-terminal section; belongs to the ChdC family.

In Halobacterium salinarum (strain ATCC 700922 / JCM 11081 / NRC-1) (Halobacterium halobium), this protein is Putative heme-binding protein VNG_2021C.